Here is a 270-residue protein sequence, read N- to C-terminus: MKMTSKKMKDELMKRLSRPEWDFQYDSEKEVLRIEQKDSKKGINVSLPGVVAKWEVNKEKAIEEVAYYVQEALIAMHKEENNAAKILPVIRSTSFPKQAEEGNPFIMTDHTAETRIYYALDSNKTYRLIDERLLQKLGLTEQQVREMALFNARSLGYEFKQDTVAGNTFYFLNTNDGYDATRILNESLLQSMREKISGDMVVAVPHQDVLIIADIVNEIGYDIIAQMTMKFFAEGHVPITSLSFVYEDGDFEPIFILAKNRKKTDGKEKG.

It belongs to the UPF0354 family.

The protein is UPF0354 protein BCE_4835 of Bacillus cereus (strain ATCC 10987 / NRS 248).